The sequence spans 309 residues: Taste receptor type 2 member 64 (309 aa).

The Extracellular segment spans residues 1 to 3 (MVY). The chain crosses the membrane as a helical span at residues 4–26 (FLLIILSILVVFAFVLGNFSNGF). The Cytoplasmic segment spans residues 27–46 (VALVNVIDWVKTRKISSADQ). A helical transmembrane segment spans residues 47-69 (ILTALVVSRIGLLWVILFHWYAN). Topologically, residues 70 to 83 (VFNSALYSSEVGAV) are extracellular. The helical transmembrane segment at 84–106 (ASNISAIINHFSIWLAASLGIFY) threads the bilayer. At 107 to 126 (LLKIANFSNLIFLHLKKRIR) the chain is on the cytoplasmic side. The chain crosses the membrane as a helical span at residues 127–149 (SVVLVILLGPLVFLICNLAVITM). Residues 150–176 (DERVWTKEYEGNVTWKIKLRNAIHLSD) lie on the Extracellular side of the membrane. An N-linked (GlcNAc...) asparagine glycan is attached at N161. The chain crosses the membrane as a helical span at residues 177 to 199 (LTVSTLANLIPFILTLICFLLLI). The Cytoplasmic portion of the chain corresponds to 200–230 (CSLHKHLKKMQLHGKGSQDLSTKVHIKALQT). A helical transmembrane segment spans residues 231 to 253 (VISFLMLYAIYFLYLITLTWNLW). At 254 to 258 (TQQNK) the chain is on the extracellular side. A helical membrane pass occupies residues 259–281 (LVFLLCQTLGIMYPSFHSFFLIM). Residues 282 to 309 (GSRKLKQTFLSVLCQVTCLVKGQQPSTP) are Cytoplasmic-facing.

This sequence belongs to the G-protein coupled receptor T2R family.

The protein resides in the membrane. Functionally, receptor that may play a role in the perception of bitterness and is gustducin-linked. May play a role in sensing the chemical composition of the gastrointestinal content. The activity of this receptor may stimulate alpha gustducin, mediate PLC-beta-2 activation and lead to the gating of TRPM5. In Pan paniscus (Pygmy chimpanzee), this protein is Taste receptor type 2 member 64 (TAS2R64).